A 293-amino-acid polypeptide reads, in one-letter code: NAD kinase (293 aa).

Residue D72 is the Proton acceptor of the active site. NAD(+) is bound by residues 72–73 (DG), 146–147 (ND), R157, K174, D176, 187–192 (TAYALS), and Q247.

The protein belongs to the NAD kinase family. It depends on a divalent metal cation as a cofactor.

The protein localises to the cytoplasm. It carries out the reaction NAD(+) + ATP = ADP + NADP(+) + H(+). Functionally, involved in the regulation of the intracellular balance of NAD and NADP, and is a key enzyme in the biosynthesis of NADP. Catalyzes specifically the phosphorylation on 2'-hydroxyl of the adenosine moiety of NAD to yield NADP. This chain is NAD kinase, found in Marinomonas sp. (strain MWYL1).